The chain runs to 409 residues: Z-DNA-binding protein 1 (409 aa).

Z-binding domains follow at residues 8 to 70 (LGTG…SLGG) and 85 to 147 (SAAQ…TIYR). Residues Lys17 and Lys43 each participate in a glycyl lysine isopeptide (Lys-Gly) (interchain with G-Cter in ubiquitin) cross-link. Positions 59–87 (SSPAPATWSLGGDGASGDGAPEIPEDSAA) are disordered. Short sequence motifs (RIP homotypic interaction motif (RHIM)) lie at residues 183 to 207 (NSLISISNSKAIQIGHGNVMSRQTI) and 241 to 265 (LIHLNKSMLRRVQLGHGNEMNLERD). 2 disordered regions span residues 269–307 (HPIFSFSSSPPESTTTADPETAFNMQTPEPGPHPEGGTT) and 323–369 (GNNN…TPSD). Over residues 270 to 290 (PIFSFSSSPPESTTTADPETA) the composition is skewed to low complexity. Positions 337-351 (GTKESADSQELKEDT) are enriched in basic and acidic residues.

Homodimer. Interacts (via RIP homotypic interaction motif) with RIPK3; leading to RIPK3 activation and necroptosis; interaction is enhanced by CASP6. Interacts (via RIP homotypic interaction motif) with RIPK1. Component of the AIM2 PANoptosome complex, a multiprotein complex that drives inflammatory cell death (PANoptosis). Post-translationally, ubiquitinated; polyubiquitinated following influenza A virus (IAV) infection. In terms of processing, phosphorylated.

It is found in the cytoplasm. It localises to the nucleus. Its activity is regulated as follows. ZBP1-dependent necroptosis is normally inhibited by RIPK1: RIPK1 inhibits the ZBP1-induced activation of RIPK3 via FADD-mediated recruitment of CASP8, which cleaves RIPK1 and limits TNF-induced necroptosis. Its function is as follows. Key innate sensor that recognizes and binds Z-RNA structures, which are produced by a number of viruses, such as herpesvirus, orthomyxovirus or flavivirus, and triggers different forms of cell death. ZBP1 acts as an essential mediator of pyroptosis, necroptosis and apoptosis (PANoptosis), an integral part of host defense against pathogens, by activating RIPK3, caspase-8 (CASP8), and the NLRP3 inflammasome. Key activator of necroptosis, a programmed cell death process in response to death-inducing TNF-alpha family members, via its ability to bind Z-RNA: once activated upon Z-RNA-binding, ZBP1 interacts and stimulates RIPK3 kinase, which phosphorylates and activates MLKL, triggering execution of programmed necrosis. In addition to TNF-induced necroptosis, necroptosis can also take place in the nucleus in response to orthomyxoviruses infection: ZBP1 recognizes and binds Z-RNA structures that are produced in infected nuclei by orthomyxoviruses, such as the influenza A virus (IAV), leading to ZBP1 activation, RIPK3 stimulation and subsequent MLKL phosphorylation, triggering disruption of the nuclear envelope and leakage of cellular DNA into the cytosol. ZBP1-dependent cell death in response to IAV infection promotes interleukin-1 alpha (IL1A) induction in an NLRP3-inflammasome-independent manner: IL1A expression is required for the optimal interleukin-1 beta (IL1B) production, and together, these cytokines promote infiltration of inflammatory neutrophils to the lung, leading to the formation of neutrophil extracellular traps. In addition to its direct role in driving necroptosis via its ability to sense Z-RNAs, also involved in PANoptosis triggered in response to bacterial infection: component of the AIM2 PANoptosome complex, a multiprotein complex that triggers PANoptosis. Also acts as the apical sensor of fungal infection responsible for activating PANoptosis. Involved in CASP8-mediated cell death via its interaction with RIPK1 but independently of its ability to sense Z-RNAs. In some cell types, also able to restrict viral replication by promoting cell death-independent responses. In response to flavivirus infection in neurons, promotes a cell death-independent pathway that restricts viral replication: together with RIPK3, promotes a death-independent transcriptional program that modifies the cellular metabolism via up-regulation expression of the enzyme ACOD1/IRG1 and production of the metabolite itaconate. Itaconate inhibits the activity of succinate dehydrogenase, generating a metabolic state in neurons that suppresses replication of viral genomes. The polypeptide is Z-DNA-binding protein 1 (Rattus norvegicus (Rat)).